A 392-amino-acid chain; its full sequence is Arogenate dehydratase/prephenate dehydratase 1, chloroplastic (392 aa).

The transit peptide at 1 to 48 (MALRCFPIWVCPQTTHHRSPLMGLAEFDADKRRRFCLWECSSSASQRA) directs the protein to the chloroplast. The 176-residue stretch at 107-282 (RISFQGIPGA…NVTRFLILAR (176 aa)) folds into the Prephenate dehydratase domain. One can recognise an ACT domain in the interval 296 to 387 (SIVFSLEEGP…SFIRILGCYP (92 aa)).

As to expression, expressed in roots, leaves, stems, flowers and siliques.

The protein localises to the plastid. The protein resides in the chloroplast stroma. The catalysed reaction is L-arogenate + H(+) = L-phenylalanine + CO2 + H2O. It carries out the reaction prephenate + H(+) = 3-phenylpyruvate + CO2 + H2O. It functions in the pathway amino-acid biosynthesis; L-phenylalanine biosynthesis; L-phenylalanine from L-arogenate: step 1/1. Its pathway is amino-acid biosynthesis; L-phenylalanine biosynthesis; phenylpyruvate from prephenate: step 1/1. Functionally, converts the prephenate produced from the shikimate-chorismate pathway into phenylalanine. Dehydratase that uses arogenate and prephenate as substrates. Utilzes more efficiently arogenate than prephenate. The chain is Arogenate dehydratase/prephenate dehydratase 1, chloroplastic from Arabidopsis thaliana (Mouse-ear cress).